The primary structure comprises 625 residues: Threonine--tRNA ligase (625 aa).

The interval methionine 1–glutamate 147 is editing domain. Residues proline 206–proline 505 are catalytic. 3 residues coordinate Zn(2+): cysteine 298, histidine 350, and histidine 474.

It belongs to the class-II aminoacyl-tRNA synthetase family. Homodimer. The cofactor is Zn(2+).

The protein localises to the cytoplasm. It catalyses the reaction tRNA(Thr) + L-threonine + ATP = L-threonyl-tRNA(Thr) + AMP + diphosphate + H(+). Its function is as follows. Catalyzes the attachment of threonine to tRNA(Thr) in a two-step reaction: L-threonine is first activated by ATP to form Thr-AMP and then transferred to the acceptor end of tRNA(Thr). Also edits incorrectly charged L-seryl-tRNA(Thr). In Thermococcus sibiricus (strain DSM 12597 / MM 739), this protein is Threonine--tRNA ligase.